A 390-amino-acid polypeptide reads, in one-letter code: GTPase Obg (390 aa).

Residues 1 to 159 (MKFVDEASIL…RELLLELMLL (159 aa)) enclose the Obg domain. Positions 127–147 (NTRFKSSVNRTPRQKTNGTPG) are disordered. A compositionally biased stretch (polar residues) spans 129–145 (RFKSSVNRTPRQKTNGT). The 174-residue stretch at 160–333 (ADVGMLGMPN…LCWDVMTFII (174 aa)) folds into the OBG-type G domain. GTP-binding positions include 166–173 (GMPNAGKS), 191–195 (FTTLV), 213–216 (DIPG), 283–286 (NKID), and 314–316 (SAA). The Mg(2+) site is built by S173 and T193.

This sequence belongs to the TRAFAC class OBG-HflX-like GTPase superfamily. OBG GTPase family. In terms of assembly, monomer. Mg(2+) serves as cofactor.

The protein resides in the cytoplasm. In terms of biological role, an essential GTPase which binds GTP, GDP and possibly (p)ppGpp with moderate affinity, with high nucleotide exchange rates and a fairly low GTP hydrolysis rate. Plays a role in control of the cell cycle, stress response, ribosome biogenesis and in those bacteria that undergo differentiation, in morphogenesis control. This chain is GTPase Obg, found in Escherichia coli O7:K1 (strain IAI39 / ExPEC).